A 258-amino-acid polypeptide reads, in one-letter code: Bidirectional sugar transporter SWEET7 (258 aa).

At 1–11 (MVFAHLNLLRK) the chain is on the extracellular side. The helical transmembrane segment at 12–32 (IVGIIGNFIALCLFLSPTPTF) threads the bilayer. A MtN3/slv 1 domain is found at 12–100 (IVGIIGNFIA…IFFVYCGRQK (89 aa)). Over 33–46 (VRIVKKKSVEEYSP) the chain is Cytoplasmic. The helical transmembrane segment at 47–67 (IPYLATLINCLVWVLYGLPTV) threads the bilayer. The Extracellular segment spans residues 68–73 (HPDSTL). Residues 74–94 (VITINGTGILIEIVFLTIFFV) form a helical membrane-spanning segment. Residues 95 to 102 (YCGRQKQR) lie on the Cytoplasmic side of the membrane. A helical transmembrane segment spans residues 103–123 (LIISAVIAAETAFIAILAVLV). The Extracellular segment spans residues 124–134 (LTLQHTTEKRT). A helical membrane pass occupies residues 135–155 (MSVGIVCCVFNVMMYASPLSV). Residues 136 to 221 (SVGIVCCVFN…LYGAYYKSTK (86 aa)) enclose the MtN3/slv 2 domain. At 156–166 (MKMVIKTKSVE) the chain is on the cytoplasmic side. A helical membrane pass occupies residues 167 to 187 (FMPFWLSVAGFLNAGVWTIYA). Residues 188-193 (LMPFDP) lie on the Extracellular side of the membrane. Residues 194–214 (FMAIPNGIGCLFGLAQLILYG) traverse the membrane as a helical segment. At 215–258 (AYYKSTKRIMAERENQPGYVGLSSAIARTGSEKTANTNQEPNNV) the chain is on the cytoplasmic side.

This sequence belongs to the SWEET sugar transporter family. Forms heterooligomers with SWEET8, SWEET11, SWEET13, SWEET16 and SWEET17.

It is found in the cell membrane. Mediates both low-affinity uptake and efflux of sugar across the plasma membrane. The chain is Bidirectional sugar transporter SWEET7 from Arabidopsis thaliana (Mouse-ear cress).